The primary structure comprises 355 residues: Uroporphyrinogen decarboxylase (355 aa).

Substrate is bound by residues 27–31 (RQAGR), D77, Y154, T209, and H328.

The protein belongs to the uroporphyrinogen decarboxylase family. Homodimer.

It is found in the cytoplasm. It carries out the reaction uroporphyrinogen III + 4 H(+) = coproporphyrinogen III + 4 CO2. Its pathway is porphyrin-containing compound metabolism; protoporphyrin-IX biosynthesis; coproporphyrinogen-III from 5-aminolevulinate: step 4/4. Catalyzes the decarboxylation of four acetate groups of uroporphyrinogen-III to yield coproporphyrinogen-III. The polypeptide is Uroporphyrinogen decarboxylase (Aliivibrio fischeri (strain ATCC 700601 / ES114) (Vibrio fischeri)).